The following is a 1129-amino-acid chain: Tyrosine-protein kinase JAK2 (1129 aa).

The region spanning 35–378 (PLLQVYLYYS…GYYRLTADAH (344 aa)) is the FERM domain. Residue Tyr-117 is modified to Phosphotyrosine; by autocatalysis. The 82-residue stretch at 399–480 (HGPIFMDFAI…NLKDLLTCYQ (82 aa)) folds into the SH2; atypical domain. 2 consecutive Protein kinase domains span residues 542–806 (LIFE…NSLF) and 846–1118 (LKFL…DLAQ). Position 852-860 (852-860 (LGKGNFGSV)) interacts with ATP. Position 865 is a phosphotyrosine; by autocatalysis (Tyr-865). Lys-879 contacts ATP. Phosphotyrosine; by autocatalysis occurs at positions 963 and 969. Catalysis depends on Asp-973, which acts as the Proton acceptor. Phosphotyrosine; by autocatalysis occurs at positions 1004 and 1005.

It belongs to the protein kinase superfamily. Tyr protein kinase family. JAK subfamily. Autophosphorylated, leading to regulate its activity.

It localises to the endomembrane system. The protein resides in the nucleus. The enzyme catalyses L-tyrosyl-[protein] + ATP = O-phospho-L-tyrosyl-[protein] + ADP + H(+). Its activity is regulated as follows. Regulated by autophosphorylation, can both activate or decrease activity. Heme regulates its activity by enhancing the phosphorylation on Tyr-1004 and Tyr-1005. In terms of biological role, non-receptor tyrosine kinase involved in various processes such as cell growth, development, differentiation or histone modifications. Mediates essential signaling events in both innate and adaptive immunity. In the cytoplasm, plays a pivotal role in signal transduction via its association with cytokine receptors. Following ligand-binding to cell surface receptors, phosphorylates specific tyrosine residues on the cytoplasmic tails of the receptor, creating docking sites for STATs proteins. Subsequently, phosphorylates the STATs proteins once they are recruited to the receptor. Phosphorylated STATs then form homodimer or heterodimers and translocate to the nucleus to activate gene transcription. For example, cell stimulation with erythropoietin (EPO) during erythropoiesis leads to JAK2 autophosphorylation, activation, and its association with erythropoietin receptor (EPOR) that becomes phosphorylated in its cytoplasmic domain. Then, STAT5 (STAT5A or STAT5B) is recruited, phosphorylated and activated by JAK2. Once activated, dimerized STAT5 translocates into the nucleus and promotes the transcription of several essential genes involved in the modulation of erythropoiesis. Part of a signaling cascade that is activated by increased cellular retinol and that leads to the activation of STAT5 (STAT5A or STAT5B). In the nucleus, plays a key role in chromatin by specifically mediating phosphorylation of 'Tyr-41' of histone H3 (H3Y41ph), a specific tag that promotes exclusion of CBX5 (HP1 alpha) from chromatin. Up-regulates the potassium voltage-gated channel activity of KCNA3. In Gallus gallus (Chicken), this protein is Tyrosine-protein kinase JAK2.